Reading from the N-terminus, the 156-residue chain is Small ribosomal subunit protein uS7 (156 aa).

It belongs to the universal ribosomal protein uS7 family. Part of the 30S ribosomal subunit. Contacts proteins S9 and S11.

One of the primary rRNA binding proteins, it binds directly to 16S rRNA where it nucleates assembly of the head domain of the 30S subunit. Is located at the subunit interface close to the decoding center, probably blocks exit of the E-site tRNA. This chain is Small ribosomal subunit protein uS7, found in Clostridium novyi (strain NT).